A 317-amino-acid chain; its full sequence is 2,3-dihydroxyphenylpropionate/2,3-dihydroxicinnamic acid 1,2-dioxygenase (317 aa).

The Proton donor role is filled by His-115. His-179 functions as the Proton acceptor in the catalytic mechanism.

Belongs to the LigB/MhpB extradiol dioxygenase family. As to quaternary structure, homotetramer. It depends on Fe(2+) as a cofactor.

It catalyses the reaction 3-(2,3-dihydroxyphenyl)propanoate + O2 = (2Z,4E)-2-hydroxy-6-oxonona-2,4-dienedioate + H(+). The enzyme catalyses (2E)-3-(2,3-dihydroxyphenyl)prop-2-enoate + O2 = (2Z,4E,7E)-2-hydroxy-6-oxonona-2,4,7-trienedioate + H(+). The protein operates within aromatic compound metabolism; 3-phenylpropanoate degradation. Catalyzes the non-heme iron(II)-dependent oxidative cleavage of 2,3-dihydroxyphenylpropionic acid and 2,3-dihydroxicinnamic acid into 2-hydroxy-6-ketononadienedioate and 2-hydroxy-6-ketononatrienedioate, respectively. The sequence is that of 2,3-dihydroxyphenylpropionate/2,3-dihydroxicinnamic acid 1,2-dioxygenase from Paraburkholderia phymatum (strain DSM 17167 / CIP 108236 / LMG 21445 / STM815) (Burkholderia phymatum).